A 784-amino-acid polypeptide reads, in one-letter code: Ribosome biogenesis protein BOP1 homolog (784 aa).

The segment covering 1–11 (MTKKLALKRKG) has biased composition (basic residues). Residues 1–159 (MTKKLALKRK…DSDTSDEEDI (159 aa)) are disordered. Composition is skewed to acidic residues over residues 27–36 (SENEEEEEDL), 45–54 (EDSTDDEGID), 62–73 (SEELQFESDEEG), and 84–111 (AEED…EDEE). The span at 112–123 (KDSKSKQADDKP) shows a compositional bias: basic and acidic residues. The segment covering 124–133 (SSSGAASKKA) has biased composition (low complexity). Over residues 138 to 148 (LSKRDTSKPEY) the composition is skewed to basic and acidic residues. Residues 149–158 (QDSDTSDEED) are compositionally biased toward acidic residues. 7 WD repeats span residues 445-486 (GHTD…RTIE), 488-526 (DEVV…KVLV), 570-612 (THFK…SQIP), 615-653 (KSKG…LVKK), 656-695 (TNSK…KPYQ), 699-738 (LHRN…DLLQ), and 754-784 (RDEF…RLYT).

Belongs to the WD repeat BOP1/ERB1 family.

The protein localises to the nucleus. The protein resides in the nucleolus. It is found in the nucleoplasm. Its function is as follows. Required for maturation of ribosomal RNAs and formation of the large ribosomal subunit. This chain is Ribosome biogenesis protein BOP1 homolog, found in Drosophila yakuba (Fruit fly).